The primary structure comprises 635 residues: Threonine--tRNA ligase (635 aa).

Residues 1 to 61 (MIVITLPDGS…EGDARLAIVT (61 aa)) form the TGS domain. Residues 242–533 (DHRKLGRELD…LIEQHAGALP (292 aa)) form a catalytic region. Positions 333, 384, and 510 each coordinate Zn(2+).

Belongs to the class-II aminoacyl-tRNA synthetase family. In terms of assembly, homodimer. Requires Zn(2+) as cofactor.

It localises to the cytoplasm. The enzyme catalyses tRNA(Thr) + L-threonine + ATP = L-threonyl-tRNA(Thr) + AMP + diphosphate + H(+). Its function is as follows. Catalyzes the attachment of threonine to tRNA(Thr) in a two-step reaction: L-threonine is first activated by ATP to form Thr-AMP and then transferred to the acceptor end of tRNA(Thr). Also edits incorrectly charged L-seryl-tRNA(Thr). The sequence is that of Threonine--tRNA ligase from Methylibium petroleiphilum (strain ATCC BAA-1232 / LMG 22953 / PM1).